We begin with the raw amino-acid sequence, 327 residues long: Lipoyl synthase (327 aa).

[4Fe-4S] cluster-binding residues include Cys-72, Cys-77, Cys-83, Cys-98, Cys-102, Cys-105, and Ser-313. The region spanning 83–302 is the Radical SAM core domain; it reads CWSHGTATIM…RKVGLEKGFL (220 aa).

It belongs to the radical SAM superfamily. Lipoyl synthase family. It depends on [4Fe-4S] cluster as a cofactor.

Its subcellular location is the cytoplasm. It carries out the reaction [[Fe-S] cluster scaffold protein carrying a second [4Fe-4S](2+) cluster] + N(6)-octanoyl-L-lysyl-[protein] + 2 oxidized [2Fe-2S]-[ferredoxin] + 2 S-adenosyl-L-methionine + 4 H(+) = [[Fe-S] cluster scaffold protein] + N(6)-[(R)-dihydrolipoyl]-L-lysyl-[protein] + 4 Fe(3+) + 2 hydrogen sulfide + 2 5'-deoxyadenosine + 2 L-methionine + 2 reduced [2Fe-2S]-[ferredoxin]. It functions in the pathway protein modification; protein lipoylation via endogenous pathway; protein N(6)-(lipoyl)lysine from octanoyl-[acyl-carrier-protein]: step 2/2. Its function is as follows. Catalyzes the radical-mediated insertion of two sulfur atoms into the C-6 and C-8 positions of the octanoyl moiety bound to the lipoyl domains of lipoate-dependent enzymes, thereby converting the octanoylated domains into lipoylated derivatives. This chain is Lipoyl synthase, found in Francisella tularensis subsp. mediasiatica (strain FSC147).